Consider the following 377-residue polypeptide: 2-aminoethylphosphonate--pyruvate transaminase (377 aa).

Lysine 194 bears the N6-(pyridoxal phosphate)lysine mark.

Belongs to the class-V pyridoxal-phosphate-dependent aminotransferase family. PhnW subfamily. As to quaternary structure, homodimer. Pyridoxal 5'-phosphate is required as a cofactor.

It carries out the reaction (2-aminoethyl)phosphonate + pyruvate = phosphonoacetaldehyde + L-alanine. Functionally, involved in phosphonate degradation. This Cupriavidus taiwanensis (strain DSM 17343 / BCRC 17206 / CCUG 44338 / CIP 107171 / LMG 19424 / R1) (Ralstonia taiwanensis (strain LMG 19424)) protein is 2-aminoethylphosphonate--pyruvate transaminase.